The sequence spans 852 residues: Metastasis-associated in colon cancer protein 1 (852 aa).

A Phosphoserine modification is found at serine 19. The ZU5 domain maps to 212–349; sequence VTIACKVNHQ…LSQVMYLVVA (138 aa). The SH3 domain occupies 549-619; the sequence is NFSNYGVTLK…HCKNVKVISK (71 aa).

In terms of assembly, interacts with FASLG. In terms of tissue distribution, preferentially expressed in metastasizing tumors.

The protein localises to the cytoplasm. Its subcellular location is the nucleus. In terms of biological role, acts as a transcription activator for MET and as a key regulator of HGF-MET signaling. Promotes cell motility, proliferation and hepatocyte growth factor (HGF)-dependent scattering in vitro and tumor growth and metastasis in vivo. The polypeptide is Metastasis-associated in colon cancer protein 1 (MACC1) (Homo sapiens (Human)).